Reading from the N-terminus, the 237-residue chain is Maternal B9.10 protein (237 aa).

The protein belongs to the BTG family.

In Xenopus laevis (African clawed frog), this protein is Maternal B9.10 protein.